A 386-amino-acid chain; its full sequence is Succinate--CoA ligase [ADP-forming] subunit beta (386 aa).

The 236-residue stretch at 9–244 (KAVLRSYGVS…LDEEDSKEIE (236 aa)) folds into the ATP-grasp domain. ATP-binding positions include K46, 53 to 55 (GRG), E99, C102, and E107. The Mg(2+) site is built by N199 and D213. Substrate contacts are provided by residues N264 and 321-323 (GIM).

This sequence belongs to the succinate/malate CoA ligase beta subunit family. In terms of assembly, heterotetramer of two alpha and two beta subunits. Mg(2+) serves as cofactor.

The enzyme catalyses succinate + ATP + CoA = succinyl-CoA + ADP + phosphate. It catalyses the reaction GTP + succinate + CoA = succinyl-CoA + GDP + phosphate. It functions in the pathway carbohydrate metabolism; tricarboxylic acid cycle; succinate from succinyl-CoA (ligase route): step 1/1. In terms of biological role, succinyl-CoA synthetase functions in the citric acid cycle (TCA), coupling the hydrolysis of succinyl-CoA to the synthesis of either ATP or GTP and thus represents the only step of substrate-level phosphorylation in the TCA. The beta subunit provides nucleotide specificity of the enzyme and binds the substrate succinate, while the binding sites for coenzyme A and phosphate are found in the alpha subunit. The sequence is that of Succinate--CoA ligase [ADP-forming] subunit beta from Bacillus cereus (strain G9842).